Here is a 147-residue protein sequence, read N- to C-terminus: Large ribosomal subunit protein bL9 (147 aa).

It belongs to the bacterial ribosomal protein bL9 family.

Its function is as follows. Binds to the 23S rRNA. The polypeptide is Large ribosomal subunit protein bL9 (Campylobacter jejuni subsp. jejuni serotype O:2 (strain ATCC 700819 / NCTC 11168)).